A 254-amino-acid polypeptide reads, in one-letter code: Thiazole synthase (254 aa).

The Schiff-base intermediate with DXP role is filled by lysine 95. 1-deoxy-D-xylulose 5-phosphate contacts are provided by residues glycine 156, 182 to 183, and 204 to 205; these read AG and NT.

It belongs to the ThiG family. In terms of assembly, homotetramer. Forms heterodimers with either ThiH or ThiS.

It is found in the cytoplasm. It carries out the reaction [ThiS sulfur-carrier protein]-C-terminal-Gly-aminoethanethioate + 2-iminoacetate + 1-deoxy-D-xylulose 5-phosphate = [ThiS sulfur-carrier protein]-C-terminal Gly-Gly + 2-[(2R,5Z)-2-carboxy-4-methylthiazol-5(2H)-ylidene]ethyl phosphate + 2 H2O + H(+). Its pathway is cofactor biosynthesis; thiamine diphosphate biosynthesis. Its function is as follows. Catalyzes the rearrangement of 1-deoxy-D-xylulose 5-phosphate (DXP) to produce the thiazole phosphate moiety of thiamine. Sulfur is provided by the thiocarboxylate moiety of the carrier protein ThiS. In vitro, sulfur can be provided by H(2)S. The polypeptide is Thiazole synthase (Vibrio atlanticus (strain LGP32) (Vibrio splendidus (strain Mel32))).